We begin with the raw amino-acid sequence, 181 residues long: Beta-lactoglobulin-2 (181 aa).

Residues 1–18 (MKCLLLALGLSLMCGNQA) form the signal peptide. Cystine bridges form between C84-C179 and C124-C138.

Belongs to the calycin superfamily. Lipocalin family. As to quaternary structure, monomer.

It is found in the secreted. Its function is as follows. Lactoglobulin is the primary component of whey, it binds retinol and is probably involved in the transport of that molecule. This chain is Beta-lactoglobulin-2 (LGB2), found in Equus caballus (Horse).